A 409-amino-acid polypeptide reads, in one-letter code: Ribose-phosphate pyrophosphokinase 1 (409 aa).

Mg(2+)-binding residues include Asp128, His130, and Asp143. Position 199 is a phosphoserine (Ser199).

It belongs to the ribose-phosphate pyrophosphokinase family.

It localises to the cytoplasm. It carries out the reaction D-ribose 5-phosphate + ATP = 5-phospho-alpha-D-ribose 1-diphosphate + AMP + H(+). It functions in the pathway metabolic intermediate biosynthesis; 5-phospho-alpha-D-ribose 1-diphosphate biosynthesis; 5-phospho-alpha-D-ribose 1-diphosphate from D-ribose 5-phosphate (route I): step 1/1. Functionally, 5-phosphoribose 1-diphosphate synthase involved in nucleotide, histidine, and tryptophan biosynthesis. Active in heteromultimeric complexes with other 5-phosphoribose 1-diphosphate synthases. In Schizosaccharomyces pombe (strain 972 / ATCC 24843) (Fission yeast), this protein is Ribose-phosphate pyrophosphokinase 1.